A 183-amino-acid chain; its full sequence is Translocon-associated protein subunit beta (183 aa).

A signal peptide spans 1-17 (MRLLAVVVLALLAVSQA). Over 18–146 (EEGARLLASK…REFDRRFSPH (129 aa)) the chain is Lumenal. Asn-88 carries an N-linked (GlcNAc...) (high mannose) asparagine glycan. Asn-104 carries an N-linked (GlcNAc...) asparagine glycan. Residues 147–167 (FLDWAAFGVMTLPSIGIPLLL) traverse the membrane as a helical segment. Residues 168 to 183 (WYSSKRKYDTPKPKKN) are Cytoplasmic-facing.

The protein belongs to the TRAP-beta family. As to quaternary structure, heterotetramer of TRAP-alpha, TRAP-beta, TRAP-delta and TRAP-gamma. Interacts with STING1.

It localises to the endoplasmic reticulum membrane. Functionally, TRAP proteins are part of a complex whose function is to bind calcium to the ER membrane and thereby regulate the retention of ER resident proteins. The sequence is that of Translocon-associated protein subunit beta (Ssr2) from Mus musculus (Mouse).